The following is a 304-amino-acid chain: tRNA dimethylallyltransferase (304 aa).

ATP is bound at residue 10-17 (GPTASGKT). 12–17 (TASGKT) is a binding site for substrate. Interaction with substrate tRNA stretches follow at residues 35–38 (DSAL), 159–163 (QRLSR), and 240–245 (RCVGYR).

It belongs to the IPP transferase family. Monomer. The cofactor is Mg(2+).

The catalysed reaction is adenosine(37) in tRNA + dimethylallyl diphosphate = N(6)-dimethylallyladenosine(37) in tRNA + diphosphate. In terms of biological role, catalyzes the transfer of a dimethylallyl group onto the adenine at position 37 in tRNAs that read codons beginning with uridine, leading to the formation of N6-(dimethylallyl)adenosine (i(6)A). The chain is tRNA dimethylallyltransferase from Shewanella sp. (strain W3-18-1).